A 350-amino-acid chain; its full sequence is Ion-translocating oxidoreductase complex subunit D (350 aa).

A run of 3 helical transmembrane segments spans residues 25–45 (ILCA…GTVI), 89–109 (IPPL…IVIV), and 129–149 (VMLL…SVIA). Thr185 carries the post-translational modification FMN phosphoryl threonine. Helical transmembrane passes span 212 to 232 (GFGV…LVML), 239 to 259 (WHIT…GYLL), 264 to 284 (FTGP…FFIA), 298 to 318 (LVFG…GGYP), and 319 to 339 (DAFA…DHYM).

It belongs to the NqrB/RnfD family. The complex is composed of six subunits: RnfA, RnfB, RnfC, RnfD, RnfE and RnfG. It depends on FMN as a cofactor.

It localises to the cell inner membrane. Functionally, part of a membrane-bound complex that couples electron transfer with translocation of ions across the membrane. This Shewanella sediminis (strain HAW-EB3) protein is Ion-translocating oxidoreductase complex subunit D.